The following is a 295-amino-acid chain: G1/S-specific cyclin-D1 (295 aa).

In terms of domain architecture, Cyclin N-terminal spans Leu28–Leu152. Lys269 is covalently cross-linked (Glycyl lysine isopeptide (Lys-Gly) (interchain with G-Cter in ubiquitin)). The interval Lys269–Ile295 is disordered. Thr286 carries the post-translational modification Phosphothreonine.

It belongs to the cyclin family. Cyclin D subfamily. As to quaternary structure, interacts with either CDK4 or CDK6 protein kinase to form a serine/threonine kinase holoenzyme complex. The cyclin subunit imparts substrate specificity to the complex. Component of the ternary complex CCND1/CDK4/CDKN1B required for nuclear translocation and modulation of CDK4-mediated kinase activity. Interacts directly with CDKN1B. Can form similar complexes with either CDKN1A or CDKN2A. Interacts with UHRF2; the interaction ubiquitinates CCND1 and appears to occur independently of phosphorylation. Interacts with USP2. Interacts (via cyclin N-terminal domain) with INSM1 (via N-terminal region); the interaction competes with the binding of CCND1 to CDK4 during cell cycle progression and inhibits CDK4 activity. Interacts with CDK4; the interaction is prevented with the binding of CCND1 to INSM1 during cell cycle progression. In terms of processing, phosphorylation at Thr-286 by MAP kinases is required for ubiquitination and degradation by the DCX(AMBRA1) complex. It also plays an essential role for recognition by the FBXO31 component of SCF (SKP1-cullin-F-box) protein ligase complex following DNA damage. Ubiquitinated at Lys-269 by the DCX(AMBRA1) complex during the transition from G1 to S cell phase, leading to its degradation: ubiquitination is dependent on Thr-286 phosphorylation. The DCX(AMBRA1) complex represents the major regulator of CCND1 stability during the G1/S transition. Also ubiquitinated by the SCF(FBXO4) and Cul7-RING(FBXW8) ubiquitin-protein ligase complexes. Following DNA damage it is ubiquitinated by the SCF(FBXO31) protein ligase complex. SCF(FBXO31) ubiquitination is dependent on Thr-286 phosphorylation. Ubiquitinated also by UHRF2 apparently in a phosphorylation-independent manner. Ubiquitination leads to its degradation and G1 arrest. Deubiquitinated by USP2; leading to its stabilization.

It localises to the nucleus. The protein localises to the cytoplasm. Its subcellular location is the nucleus membrane. Its function is as follows. Regulatory component of the cyclin D1-CDK4 (DC) complex that phosphorylates and inhibits members of the retinoblastoma (RB) protein family including RB1 and regulates the cell-cycle during G(1)/S transition. Phosphorylation of RB1 allows dissociation of the transcription factor E2F from the RB/E2F complex and the subsequent transcription of E2F target genes which are responsible for the progression through the G(1) phase. Hypophosphorylates RB1 in early G(1) phase. Cyclin D-CDK4 complexes are major integrators of various mitogenenic and antimitogenic signals. Also a substrate for SMAD3, phosphorylating SMAD3 in a cell-cycle-dependent manner and repressing its transcriptional activity. Component of the ternary complex, cyclin D1/CDK4/CDKN1B, required for nuclear translocation and activity of the cyclin D-CDK4 complex. Exhibits transcriptional corepressor activity with INSM1 on the NEUROD1 and INS promoters in a cell cycle-independent manner. This is G1/S-specific cyclin-D1 (Ccnd1) from Rattus norvegicus (Rat).